We begin with the raw amino-acid sequence, 266 residues long: Ubiquinone biosynthesis protein COQ4 homolog, mitochondrial (266 aa).

Residues His-169, Asp-170, His-173, and Glu-185 each coordinate Zn(2+).

It belongs to the COQ4 family. Component of a multi-subunit COQ enzyme complex. Zn(2+) serves as cofactor.

It is found in the mitochondrion inner membrane. It catalyses the reaction a 4-hydroxy-3-methoxy-5-(all-trans-polyprenyl)benzoate + H(+) = a 2-methoxy-6-(all-trans-polyprenyl)phenol + CO2. It participates in cofactor biosynthesis; ubiquinone biosynthesis. Lyase that catalyzes the C1-decarboxylation of 4-hydroxy-3-methoxy-5-(all-trans-polyprenyl)benzoic acid into 2-methoxy-6-(all-trans-polyprenyl)phenol during ubiquinone biosynthesis. This chain is Ubiquinone biosynthesis protein COQ4 homolog, mitochondrial, found in Drosophila ananassae (Fruit fly).